The following is a 185-amino-acid chain: Transcription termination/antitermination protein NusG (185 aa).

Residues 134 to 164 (VGKRVRIVDGAFSGFEAPITEINGDKLTLTV) form the KOW domain.

The protein belongs to the NusG family.

Functionally, participates in transcription elongation, termination and antitermination. The polypeptide is Transcription termination/antitermination protein NusG (Lactococcus lactis subsp. lactis (strain IL1403) (Streptococcus lactis)).